The following is a 185-amino-acid chain: Crossover junction endodeoxyribonuclease RuvC (185 aa).

Active-site residues include Asp7, Glu68, and Asp141. Positions 7, 68, and 141 each coordinate Mg(2+).

This sequence belongs to the RuvC family. Homodimer which binds Holliday junction (HJ) DNA. The HJ becomes 2-fold symmetrical on binding to RuvC with unstacked arms; it has a different conformation from HJ DNA in complex with RuvA. In the full resolvosome a probable DNA-RuvA(4)-RuvB(12)-RuvC(2) complex forms which resolves the HJ. The cofactor is Mg(2+).

It is found in the cytoplasm. It carries out the reaction Endonucleolytic cleavage at a junction such as a reciprocal single-stranded crossover between two homologous DNA duplexes (Holliday junction).. Functionally, the RuvA-RuvB-RuvC complex processes Holliday junction (HJ) DNA during genetic recombination and DNA repair. Endonuclease that resolves HJ intermediates. Cleaves cruciform DNA by making single-stranded nicks across the HJ at symmetrical positions within the homologous arms, yielding a 5'-phosphate and a 3'-hydroxyl group; requires a central core of homology in the junction. The consensus cleavage sequence is 5'-(A/T)TT(C/G)-3'. Cleavage occurs on the 3'-side of the TT dinucleotide at the point of strand exchange. HJ branch migration catalyzed by RuvA-RuvB allows RuvC to scan DNA until it finds its consensus sequence, where it cleaves and resolves the cruciform DNA. The chain is Crossover junction endodeoxyribonuclease RuvC from Mycobacterium sp. (strain MCS).